We begin with the raw amino-acid sequence, 1805 residues long: Obscurin-like protein 1 (1805 aa).

Position 10 is a phosphoserine (Ser10). Residues 12 to 100 form the Ig-like 1 domain; it reads PCFLRFPRPV…GEAYAAAAVT (89 aa). The segment at 17 to 19 is interaction with TTN; it reads FPR. Cys33 and Cys84 are disulfide-bonded. The tract at residues 85-94 is interaction with TTN; that stretch reads RARNAAGEAY. The segment covering 104–122 has biased composition (pro residues); the sequence is PPAPEPEPQSSECPPPPPG. The segment at 104 to 131 is disordered; sequence PPAPEPEPQSSECPPPPPGTGEGAPVFL. Ig-like domains lie at 128–225, 240–330, and 339–425; these read PVFL…ALLQ, PPVR…QTLS, and PRLR…ANVT. Intrachain disulfides connect Cys149–Cys209, Cys267–Cys319, and Cys362–Cys412. Residues 517 to 615 form the Fibronectin type-III domain; the sequence is PPGPPVLVEM…FNGSAHLVPT (99 aa). 10 consecutive Ig-like domains span residues 720 to 800, 804 to 891, 902 to 982, 986 to 1075, 1078 to 1165, 1176 to 1261, 1266 to 1351, 1355 to 1442, 1536 to 1628, and 1702 to 1798; these read PQDK…FSVT, PPVH…FTVT, PNGK…FTIT, PPVR…VTVT, PERI…FNVS, PEAV…FNVQ, PPVK…ARLH, TELL…ARLS, PVTI…REVS, and PAQS…ADTQ. 6 disulfide bridges follow: Cys738-Cys788, Cys829-Cys879, Cys920-Cys970, Cys1011-Cys1061, Cys1103-Cys1153, and Cys1195-Cys1245. Cys1558 and Cys1608 are joined by a disulfide.

Component of the 3M complex, composed of core components CUL7, CCDC8 and OBSL1. Interacts with CCDC8. Interacts with CUL7; the interaction is direct. Interacts with FBXW8. Interacts (via N-terminal Ig-like domain) with TTN/titin (via C-terminal Ig-like domain); the interaction is direct. As to expression, expressed in granule neurons, with levels decreasing with neuronal maturation.

It is found in the cytoplasm. Its subcellular location is the perinuclear region. It localises to the golgi apparatus. In terms of biological role, core component of the 3M complex, a complex required to regulate microtubule dynamics and genome integrity. It is unclear how the 3M complex regulates microtubules, it could act by controlling the level of a microtubule stabilizer. Acts as a regulator of the Cul7-RING(FBXW8) ubiquitin-protein ligase, playing a critical role in the ubiquitin ligase pathway that regulates Golgi morphogenesis and dendrite patterning in brain. Required to localize CUL7 to the Golgi apparatus in neurons. In Rattus norvegicus (Rat), this protein is Obscurin-like protein 1 (Obsl1).